The sequence spans 471 residues: UTP--glucose-1-phosphate uridylyltransferase (471 aa).

Residues 87 to 90 (LNGG), lysine 101, glutamine 164, and glycine 193 contribute to the UTP site. 89-90 (GG) serves as a coordination point for substrate. Residues histidine 194 and 222–224 (NSD) contribute to the substrate site. Residues aspartate 224 and lysine 362 each coordinate UTP.

It belongs to the UDPGP type 1 family.

The protein resides in the cytoplasm. The enzyme catalyses alpha-D-glucose 1-phosphate + UTP + H(+) = UDP-alpha-D-glucose + diphosphate. Functionally, plays a central role as a glucosyl donor in cellular metabolic pathways. The sequence is that of UTP--glucose-1-phosphate uridylyltransferase from Pyrus pyrifolia (Chinese pear).